Consider the following 539-residue polypeptide: Carotene epsilon-monooxygenase, chloroplastic (539 aa).

Residues 1 to 36 (MESSLFSPSSSSYSSLFTAKPTRLLSPKPKFTFSIR) constitute a chloroplast transit peptide. Heme is bound at residue cysteine 487.

This sequence belongs to the cytochrome P450 family. Heme serves as cofactor.

It localises to the plastid. It is found in the chloroplast. The catalysed reaction is alpha-carotene + reduced [NADPH--hemoprotein reductase] + O2 = alpha-cryptoxanthin + oxidized [NADPH--hemoprotein reductase] + H2O + H(+). The enzyme catalyses zeinoxanthin + reduced [NADPH--hemoprotein reductase] + O2 = lutein + oxidized [NADPH--hemoprotein reductase] + H2O + H(+). Functionally, heme-containing cytochrome P450 involved in the biosynthesis of xanthophylls. Specific for epsilon- and beta-ring hydroxylation of alpha-carotene. Has only a low activity toward the beta-rings of beta-carotene. The preferred substrate in planta is not alpha-carotene but the epsilon-ring of zeinoxanthin. Possesses a major beta-carotene hydroxylase activity in planta when depleted in its preferred substrate alpha-carotene. The protein is Carotene epsilon-monooxygenase, chloroplastic (CYP97C1) of Arabidopsis thaliana (Mouse-ear cress).